The primary structure comprises 186 residues: Interferon beta (186 aa).

An N-terminal signal peptide occupies residues 1 to 21 (MTGRCILQIALLVCFFTTAHS). Tyrosine 24 carries the phosphotyrosine modification. 4 N-linked (GlcNAc...) asparagine glycosylation sites follow: asparagine 46, asparagine 101, asparagine 131, and asparagine 136. Cysteine 52 and cysteine 161 are disulfide-bonded.

The protein belongs to the alpha/beta interferon family. In terms of assembly, monomer.

The protein resides in the secreted. Type I interferon cytokine that plays a key role in the innate immune response to infection, developing tumors and other inflammatory stimuli. Signals via binding to high-affinity (IFNAR2) and low-affinity (IFNAR1) heterodimeric receptor, activating the canonical Jak-STAT signaling pathway resulting in transcriptional activation or repression of interferon-regulated genes that encode the effectors of the interferon response, such as antiviral proteins, regulators of cell proliferation and differentiation, and immunoregulatory proteins. Signals mostly via binding to a IFNAR1-IFNAR2 heterodimeric receptor, but can also function with IFNAR1 alone and independently of Jak-STAT pathways. Elicits a wide variety of responses, including antiviral and antibacterial activities, and can regulate the development of B-cells, myelopoiesis and lipopolysaccharide (LPS)-inducible production of tumor necrosis factor. Plays a role in neuronal homeostasis by regulating dopamine turnover and protecting dopaminergic neurons: acts by promoting neuronal autophagy and alpha-synuclein clearance, thereby preventing dopaminergic neuron loss. IFNB1 is more potent than interferon-alpha (IFN-alpha) in inducing the apoptotic and antiproliferative pathways required for control of tumor cell growth. This is Interferon beta (IFNB1) from Felis catus (Cat).